The primary structure comprises 29 residues: Cycloviolacin-H2 (29 aa).

Residues 1-29 (SAIACGESCVYIPCFIPGCSCRNRVCYLN) constitute a cross-link (cyclopeptide (Ser-Asn)). Disulfide bonds link C5-C19, C9-C21, and C14-C26.

This is a cyclic peptide.

Its function is as follows. Probably participates in a plant defense mechanism. This is Cycloviolacin-H2 from Viola hederacea (Australian violet).